The chain runs to 107 residues: Histone H4 (107 aa).

The segment covering 1–16 (MPGRGKGGKGGKGYGK) has biased composition (gly residues). A disordered region spans residues 1-23 (MPGRGKGGKGGKGYGKVGAKRHA). Residues 17-21 (VGAKR) mediate DNA binding.

The protein belongs to the histone H4 family. The nucleosome is a histone octamer containing two molecules each of H2A, H2B, H3 and H4 assembled in one H3-H4 heterotetramer and two H2A-H2B heterodimers. The octamer wraps approximately 147 bp of DNA.

It is found in the nucleus. Its subcellular location is the chromosome. Its function is as follows. Core component of nucleosome. Nucleosomes wrap and compact DNA into chromatin, limiting DNA accessibility to the cellular machineries which require DNA as a template. Histones thereby play a central role in transcription regulation, DNA repair, DNA replication and chromosomal stability. DNA accessibility is regulated via a complex set of post-translational modifications of histones, also called histone code, and nucleosome remodeling. The protein is Histone H4 of Euplotes crassus.